The following is a 100-amino-acid chain: Small ribosomal subunit protein uS14c (100 aa).

It belongs to the universal ribosomal protein uS14 family. Part of the 30S ribosomal subunit.

It is found in the plastid. The protein localises to the chloroplast. In terms of biological role, binds 16S rRNA, required for the assembly of 30S particles. The chain is Small ribosomal subunit protein uS14c from Calycanthus floridus var. glaucus (Eastern sweetshrub).